The sequence spans 415 residues: UDP-N-acetylmuramoylalanine--D-glutamate ligase (415 aa).

Position 91–97 (91–97 (GTDGKST)) interacts with ATP.

Belongs to the MurCDEF family.

The protein localises to the cytoplasm. It carries out the reaction UDP-N-acetyl-alpha-D-muramoyl-L-alanine + D-glutamate + ATP = UDP-N-acetyl-alpha-D-muramoyl-L-alanyl-D-glutamate + ADP + phosphate + H(+). Its pathway is cell wall biogenesis; peptidoglycan biosynthesis. Its function is as follows. Cell wall formation. Catalyzes the addition of glutamate to the nucleotide precursor UDP-N-acetylmuramoyl-L-alanine (UMA). This Aquifex aeolicus (strain VF5) protein is UDP-N-acetylmuramoylalanine--D-glutamate ligase.